The following is a 37-amino-acid chain: Large ribosomal subunit protein bL36 (37 aa).

The protein belongs to the bacterial ribosomal protein bL36 family.

The polypeptide is Large ribosomal subunit protein bL36 (Metamycoplasma arthritidis (strain 158L3-1) (Mycoplasma arthritidis)).